The primary structure comprises 371 residues: 4-hydroxy-3-methylbut-2-en-1-yl diphosphate synthase (flavodoxin) (371 aa).

[4Fe-4S] cluster-binding residues include C268, C271, C303, and E310.

The protein belongs to the IspG family. It depends on [4Fe-4S] cluster as a cofactor.

It carries out the reaction (2E)-4-hydroxy-3-methylbut-2-enyl diphosphate + oxidized [flavodoxin] + H2O + 2 H(+) = 2-C-methyl-D-erythritol 2,4-cyclic diphosphate + reduced [flavodoxin]. Its pathway is isoprenoid biosynthesis; isopentenyl diphosphate biosynthesis via DXP pathway; isopentenyl diphosphate from 1-deoxy-D-xylulose 5-phosphate: step 5/6. Converts 2C-methyl-D-erythritol 2,4-cyclodiphosphate (ME-2,4cPP) into 1-hydroxy-2-methyl-2-(E)-butenyl 4-diphosphate. The polypeptide is 4-hydroxy-3-methylbut-2-en-1-yl diphosphate synthase (flavodoxin) (Lysinibacillus sphaericus (strain C3-41)).